We begin with the raw amino-acid sequence, 182 residues long: Large ribosomal subunit protein uL16 (182 aa).

It belongs to the universal ribosomal protein uL16 family. Part of the 50S ribosomal subunit.

The polypeptide is Large ribosomal subunit protein uL16 (Thermococcus kodakarensis (strain ATCC BAA-918 / JCM 12380 / KOD1) (Pyrococcus kodakaraensis (strain KOD1))).